The following is a 540-amino-acid chain: Isocitrate lyase (540 aa).

Substrate is bound at residue 103–105; sequence SGW. Aspartate 187 provides a ligand contact to Mg(2+). The active-site Proton acceptor is the cysteine 225. Substrate contacts are provided by residues 226 to 227, 385 to 389, and threonine 458; these read GH and NNSPS.

This sequence belongs to the isocitrate lyase/PEP mutase superfamily. Isocitrate lyase family. Homotetramer. The cofactor is Mg(2+).

It carries out the reaction D-threo-isocitrate = glyoxylate + succinate. Its pathway is carbohydrate metabolism; glyoxylate cycle; (S)-malate from isocitrate: step 1/2. It participates in one-carbon metabolism; formaldehyde assimilation via serine pathway. Its activity is regulated as follows. In the presence of magnesium, inhibited by oxalate, potassium cyanide, manganese, silver, cadmium and to a lesser extent by succinate, glycolate, iodoacetamide, DL-penicillamine, aluminum, sodium, potassium, lithium and strontium. Its function is as follows. Involved in the metabolic adaptation in response to environmental changes. Catalyzes the reversible formation of succinate and glyoxylate from isocitrate, a key step of the glyoxylate cycle, which operates as an anaplerotic route for replenishing the tricarboxylic acid cycle during growth on fatty acid substrates. May be involved in the assimilation of one-carbon compounds via the isocitrate lyase-positive serine pathway. The protein is Isocitrate lyase of Hyphomicrobium methylovorum.